We begin with the raw amino-acid sequence, 281 residues long: BEN domain-containing protein 6 (281 aa).

Disordered regions lie at residues Val15–Leu62 and Ser143–Lys172. The stretch at Arg19–Gln99 forms a coiled coil. The span at Ser143–Ser160 shows a compositional bias: low complexity. Residues Lys162 to Lys172 are compositionally biased toward basic and acidic residues. Positions Glu171–Lys271 constitute a BEN domain.

As to quaternary structure, interacts (via BEN domain) with RBPJ.

Its subcellular location is the nucleus. Its function is as follows. Acts as a corepressor of recombining binding protein suppressor hairless (RBPJ) and inhibits Notch signaling in neural stem cells, thereby opposing their self-renewal and promoting neurogenesis. In Mus musculus (Mouse), this protein is BEN domain-containing protein 6 (Bend6).